The sequence spans 436 residues: Histidinol dehydrogenase (436 aa).

Ser-237, Gln-259, and His-262 together coordinate substrate. Residues Gln-259 and His-262 each contribute to the Zn(2+) site. Active-site proton acceptor residues include Glu-327 and His-328. His-328, Asp-361, Glu-415, and His-420 together coordinate substrate. Residue Asp-361 participates in Zn(2+) binding. His-420 provides a ligand contact to Zn(2+).

It belongs to the histidinol dehydrogenase family. The cofactor is Zn(2+).

It catalyses the reaction L-histidinol + 2 NAD(+) + H2O = L-histidine + 2 NADH + 3 H(+). It participates in amino-acid biosynthesis; L-histidine biosynthesis; L-histidine from 5-phospho-alpha-D-ribose 1-diphosphate: step 9/9. Its function is as follows. Catalyzes the sequential NAD-dependent oxidations of L-histidinol to L-histidinaldehyde and then to L-histidine. This Helicobacter hepaticus (strain ATCC 51449 / 3B1) protein is Histidinol dehydrogenase.